The following is a 529-amino-acid chain: CTP synthase (529 aa).

The interval 1-266 (MTKYIIVTGG…TKKIFNKLGL (266 aa)) is amidoligase domain. Residue S13 participates in CTP binding. S13 contacts UTP. 14–19 (SVGKGT) lines the ATP pocket. L-glutamine is bound at residue Y54. Position 71 (D71) interacts with ATP. Mg(2+) contacts are provided by D71 and E141. Residues 148 to 150 (DIE), 187 to 192 (KTKPLQ), and K223 contribute to the CTP site. UTP-binding positions include 187-192 (KTKPLQ) and K223. Residues 291–529 (KIALVGKYTK…FLNFLSVASA (239 aa)) form the Glutamine amidotransferase type-1 domain. Position 354 (G354) interacts with L-glutamine. Catalysis depends on C381, which acts as the Nucleophile; for glutamine hydrolysis. Residues 382–385 (FGMQ), E405, and R462 contribute to the L-glutamine site. Residues H506 and E508 contribute to the active site.

It belongs to the CTP synthase family. Homotetramer.

It catalyses the reaction UTP + L-glutamine + ATP + H2O = CTP + L-glutamate + ADP + phosphate + 2 H(+). The enzyme catalyses L-glutamine + H2O = L-glutamate + NH4(+). It carries out the reaction UTP + NH4(+) + ATP = CTP + ADP + phosphate + 2 H(+). It participates in pyrimidine metabolism; CTP biosynthesis via de novo pathway; CTP from UDP: step 2/2. Its activity is regulated as follows. Allosterically activated by GTP, when glutamine is the substrate; GTP has no effect on the reaction when ammonia is the substrate. The allosteric effector GTP functions by stabilizing the protein conformation that binds the tetrahedral intermediate(s) formed during glutamine hydrolysis. Inhibited by the product CTP, via allosteric rather than competitive inhibition. Catalyzes the ATP-dependent amination of UTP to CTP with either L-glutamine or ammonia as the source of nitrogen. Regulates intracellular CTP levels through interactions with the four ribonucleotide triphosphates. The polypeptide is CTP synthase (Sulfolobus acidocaldarius (strain ATCC 33909 / DSM 639 / JCM 8929 / NBRC 15157 / NCIMB 11770)).